Here is a 323-residue protein sequence, read N- to C-terminus: Fos-related antigen 2 (323 aa).

The segment covering 1-27 (MYQDYPGSFDTSSRGSSGSPGHPEPYS) has biased composition (low complexity). The tract at residues 1–31 (MYQDYPGSFDTSSRGSSGSPGHPEPYSAGAA) is disordered. One can recognise a bZIP domain in the interval 124-187 (EEKRRIRRER…EKLEFMLVAH (64 aa)). The segment at 126-128 (KRR) is basic motif. The tract at residues 129-136 (IRRERNKL) is leucine-zipper. Disordered stretches follow at residues 194-214 (SPEE…TGAS) and 288-323 (ESPL…LLAL). Low complexity predominate over residues 305–317 (SSSGDQSSDSLNS).

This sequence belongs to the bZIP family. Fos subfamily. In terms of assembly, heterodimer with JUN.

The protein localises to the nucleus. The sequence is that of Fos-related antigen 2 (FOSL2) from Gallus gallus (Chicken).